Reading from the N-terminus, the 332-residue chain is D-alanine--D-alanine ligase (332 aa).

The ATP-grasp domain maps to 124–329; it reads KMWFSALNIP…FPDYLLSNIN (206 aa). 154 to 209 contacts ATP; that stretch reads ALVNWGSIFVKAASQGSSVGCYRIDNQEDVASTLAQAFTYSDYVIVEKTISARELE. Mg(2+)-binding residues include Asp283, Glu296, and Asn298.

It belongs to the D-alanine--D-alanine ligase family. Mg(2+) is required as a cofactor. The cofactor is Mn(2+).

The protein localises to the cytoplasm. The enzyme catalyses 2 D-alanine + ATP = D-alanyl-D-alanine + ADP + phosphate + H(+). The protein operates within cell wall biogenesis; peptidoglycan biosynthesis. Functionally, cell wall formation. This Shewanella piezotolerans (strain WP3 / JCM 13877) protein is D-alanine--D-alanine ligase.